We begin with the raw amino-acid sequence, 276 residues long: Protein MGF 360-15R (276 aa).

It belongs to the asfivirus MGF 360 family.

Plays a role in virus cell tropism, and may be required for efficient virus replication in macrophages. This is Protein MGF 360-15R from African swine fever virus (isolate Tick/South Africa/Pretoriuskop Pr4/1996) (ASFV).